The chain runs to 214 residues: Protein-L-isoaspartate O-methyltransferase (214 aa).

The active site involves serine 61.

It belongs to the methyltransferase superfamily. L-isoaspartyl/D-aspartyl protein methyltransferase family.

Its subcellular location is the cytoplasm. The enzyme catalyses [protein]-L-isoaspartate + S-adenosyl-L-methionine = [protein]-L-isoaspartate alpha-methyl ester + S-adenosyl-L-homocysteine. In terms of biological role, catalyzes the methyl esterification of L-isoaspartyl residues in peptides and proteins that result from spontaneous decomposition of normal L-aspartyl and L-asparaginyl residues. It plays a role in the repair and/or degradation of damaged proteins. This chain is Protein-L-isoaspartate O-methyltransferase, found in Paramagnetospirillum magneticum (strain ATCC 700264 / AMB-1) (Magnetospirillum magneticum).